Reading from the N-terminus, the 141-residue chain is MTNKGRAGTGPAPCPCGNGAYDTCCGRFHRGEASPPTAEALMRSRYSAYVLGDVSWLRQTWHASTCPPDLSADPGTNWLGLTVKSHAQQDATHATVEFVARYKVGGRAHRLHELSRFVFESREPGEASRWLYVDGDLREPA.

Belongs to the UPF0225 family.

This is UPF0225 protein Rmet_0111 from Cupriavidus metallidurans (strain ATCC 43123 / DSM 2839 / NBRC 102507 / CH34) (Ralstonia metallidurans).